The sequence spans 91 residues: Potassium channel toxin Meg-beta-KTx1 (91 aa).

An N-terminal signal peptide occupies residues 1 to 19; that stretch reads MQRNLVVLLFLGMVALSSC. Residues 20-27 constitute a propeptide that is removed on maturation; the sequence is GLREKHFQ. The BetaSPN-type CS-alpha/beta domain occupies 54 to 91; that stretch reads QFGCPAYQGYCDDHCQDIKKQEGFCHGFKCKCGIPMGF. Disulfide bonds link cysteine 57/cysteine 78, cysteine 64/cysteine 83, and cysteine 68/cysteine 85.

It belongs to the long chain scorpion toxin family. Class 1 subfamily. As to expression, expressed by the venom gland.

The protein localises to the secreted. Its function is as follows. Inhibits voltage-gated potassium channel. This Mesobuthus gibbosus (Mediterranean checkered scorpion) protein is Potassium channel toxin Meg-beta-KTx1.